The chain runs to 131 residues: Transcription antitermination protein NusB (131 aa).

It belongs to the NusB family.

Its function is as follows. Involved in transcription antitermination. Required for transcription of ribosomal RNA (rRNA) genes. Binds specifically to the boxA antiterminator sequence of the ribosomal RNA (rrn) operons. The polypeptide is Transcription antitermination protein NusB (Caldicellulosiruptor saccharolyticus (strain ATCC 43494 / DSM 8903 / Tp8T 6331)).